The following is a 150-amino-acid chain: Ribosome-binding factor A (150 aa).

Residues 126-150 (EVARDLSHDDDEDGGADEAPRNGDE) form a disordered region.

Belongs to the RbfA family. In terms of assembly, monomer. Binds 30S ribosomal subunits, but not 50S ribosomal subunits or 70S ribosomes.

It is found in the cytoplasm. In terms of biological role, one of several proteins that assist in the late maturation steps of the functional core of the 30S ribosomal subunit. Associates with free 30S ribosomal subunits (but not with 30S subunits that are part of 70S ribosomes or polysomes). Required for efficient processing of 16S rRNA. May interact with the 5'-terminal helix region of 16S rRNA. This is Ribosome-binding factor A from Brucella suis (strain ATCC 23445 / NCTC 10510).